Consider the following 457-residue polypeptide: Protein OS-9 homolog (457 aa).

Positions 1-22 (MIFLPVTSVVFAISWIYSGVSA) are cleaved as a signal peptide. Residues Asn47 and Asn71 are each glycosylated (N-linked (GlcNAc...) asparagine). Residues 104-222 (NPIEMNTVPI…RLFLPQLCEL (119 aa)) form the MRH domain. Trp116 is a binding site for a mannooligosaccharide derivative. 2 N-linked (GlcNAc...) asparagine glycosylation sites follow: Asn142 and Asn147. 2 cysteine pairs are disulfide-bonded: Cys174-Cys208 and Cys189-Cys220. A mannooligosaccharide derivative contacts are provided by Asp175, Arg181, Glu204, and Tyr210. Residue Asn389 is glycosylated (N-linked (GlcNAc...) asparagine).

It belongs to the OS-9 family. Interacts with missfolded ER lumenal proteins.

It is found in the endoplasmic reticulum membrane. In terms of biological role, lectin involved in the quality control of the secretory pathway. As a member of the endoplasmic reticulum-associated degradation lumenal (ERAD-L) surveillance system, targets misfolded endoplasmic reticulum lumenal glycoproteins for degradation. The sequence is that of Protein OS-9 homolog (YOS9) from Kluyveromyces lactis (strain ATCC 8585 / CBS 2359 / DSM 70799 / NBRC 1267 / NRRL Y-1140 / WM37) (Yeast).